The chain runs to 248 residues: Ubiquinone biosynthesis O-methyltransferase (248 aa).

S-adenosyl-L-methionine contacts are provided by R41, G72, D93, and M136.

This sequence belongs to the methyltransferase superfamily. UbiG/COQ3 family.

It catalyses the reaction a 3-demethylubiquinol + S-adenosyl-L-methionine = a ubiquinol + S-adenosyl-L-homocysteine + H(+). The catalysed reaction is a 3-(all-trans-polyprenyl)benzene-1,2-diol + S-adenosyl-L-methionine = a 2-methoxy-6-(all-trans-polyprenyl)phenol + S-adenosyl-L-homocysteine + H(+). It functions in the pathway cofactor biosynthesis; ubiquinone biosynthesis. In terms of biological role, O-methyltransferase that catalyzes the 2 O-methylation steps in the ubiquinone biosynthetic pathway. The polypeptide is Ubiquinone biosynthesis O-methyltransferase (Rhizobium rhizogenes (strain K84 / ATCC BAA-868) (Agrobacterium radiobacter)).